A 24-amino-acid chain; its full sequence is Humanin-like 1 (24 aa).

The protein belongs to the humanin family. As to expression, highly expressed in the kidney, heart muscle and testis.

It localises to the secreted. Its subcellular location is the cytoplasm. Functionally, plays a role as a neuroprotective and antiapoptotic factor. In Homo sapiens (Human), this protein is Humanin-like 1.